The primary structure comprises 443 residues: Omega-6 fatty acid desaturase, chloroplastic (443 aa).

Residues 1 to 64 constitute a chloroplast transit peptide; it reads MASRIADSLF…AKKRIGCIKA (64 aa). Residues 166 to 170 carry the Histidine box-1 motif; that stretch reads HDCAH. The Histidine box-2 signature appears at 202-206; that stretch reads HDRHH. Positions 362–366 match the Histidine box-3 motif; the sequence is HIPHH.

Belongs to the fatty acid desaturase type 1 family.

The protein resides in the plastid. It localises to the chloroplast membrane. It carries out the reaction a (9Z)-octadecenoyl-containing glycerolipid + 2 reduced [2Fe-2S]-[ferredoxin] + O2 + 2 H(+) = a (9Z,12Z)-octadecadienoyl-containing glycerolipid + 2 oxidized [2Fe-2S]-[ferredoxin] + 2 H2O. It participates in lipid metabolism; polyunsaturated fatty acid biosynthesis. Chloroplast omega-6 fatty acid desaturase introduces the second double bond in the biosynthesis of 16:3 and 18:3 fatty acids, important constituents of plant membranes. It is thought to use ferredoxin as an electron donor and to act on fatty acids esterified to galactolipids, sulfolipids and phosphatidylglycerol. The protein is Omega-6 fatty acid desaturase, chloroplastic of Brassica napus (Rape).